A 614-amino-acid chain; its full sequence is MIKKATLLTAFSVTAFSAWAQDTSPDTLVVTANRFQQPRSAVLAPVTIVTRQDIERWQSTSVNDVLRRLPGVDIAQSGGAGQNSSIFIRGTNSSHVLVLIDGVRLNLAGVSGSADLSQFPVSLVQRIEYIRGPRSAIYGSDAIGGVVNIITTRDNPGTELTAGWGSNSYQNYDISTQQQLGENTRATLIGDYEYTKGFDVVAKGGTGMQAQPDRDGFLSKTLYGALEHTFSDRWSGFVRGYGYDNRTDYDAYYSPGSPLIDTRKLYSQSWDAGLRFNGERIQSQLVSSYSHSKDYNYDPHYGRYDTSATLDEMKQYNVQWTNSVVVGHGNVGAGVDWQKQTTTPGTGYVPEGYDQRNTGVYLTGLQQLGDFTLEAAARSDDNSQFGRHGTWQTSAGWEFIEGYRFIASYGTSYKAPNLGQLYGYYGNPNLNPEKSKQWEGAFEGLTAGVSWRISGYRNDINDMIDYDDHLQKYYNEGKARIKGIEATANFDTGPLTHTVSYDYVDARNAITDTPLPRRSKQMAKYQLDWDVYDFDWGVTYQYLGSRYDSDYSAYPYRTVKMGGVSLWDLTVAYPVTSHLTVRGKIANLFDKDYETVYGYQTAGREYTLSGSYTF.

The N-terminal stretch at 1–20 (MIKKATLLTAFSVTAFSAWA) is a signal peptide. The short motif at 26 to 33 (DTLVVTAN) is the TonB box element. A TBDR plug domain is found at 38–152 (PRSAVLAPVT…IGGVVNIITT (115 aa)). Cyanocob(III)alamin is bound by residues serine 85, asparagine 92, and 110–111 (VS). The TBDR beta-barrel domain occupies 155 to 614 (NPGTELTAGW…EYTLSGSYTF (460 aa)). 3 consecutive transmembrane segments (beta stranded) span residues 158-165 (TELTAGWG), 169-178 (YQNYDISTQQ), and 184-195 (TRATLIGDYEYT). 4 residues coordinate Ca(2+): aspartate 199, glutamine 211, aspartate 213, and aspartate 215. Beta stranded transmembrane passes span 217 to 227 (FLSKTLYGALE) and 232 to 248 (DRWSGFVRGYGYDNRTD). Residues tyrosine 249 and aspartate 250 each coordinate Ca(2+). Residue alanine 251 participates in cyanocob(III)alamin binding. Position 261 (aspartate 261) interacts with Ca(2+). Transmembrane regions (beta stranded) follow at residues 263–277 (RKLYSQSWDAGLRFN), 279–296 (ERIQSQLVSSYSHSKDYN), 309–325 (TLDEMKQYNVQWTNSVV), 328–337 (HGNVGAGVDW), 353–369 (YDQRNTGVYLTGLQQLG), 371–381 (FTLEAAARSDD), 385–400 (FGRHGTWQTSAGWEFI), 403–417 (YRFIASYGTSYKAPN), 434–443 (KSKQWEGAFE), 449–458 (VSWRISGYRN), 473–490 (YYNEGKARIKGIEATANF), 494–509 (PLTHTVSYDYVDARNA), 517–529 (RRSKQMAKYQLDW), and 535–550 (DWGVTYQYLGSRYDSD). Threonine 309 contributes to the cyanocob(III)alamin binding site. Arginine 517 provides a ligand contact to cyanocob(III)alamin. Tyrosine 551 provides a ligand contact to cyanocob(III)alamin. Transmembrane regions (beta stranded) follow at residues 558–572 (TVKMGGVSLWDLTVA), 585–596 (IANLFDKDYETV), and 602–614 (AGREYTLSGSYTF). Positions 597 to 614 (YGYQTAGREYTLSGSYTF) match the TonB C-terminal box motif.

This sequence belongs to the TonB-dependent receptor family. BtuB (TC 1.B.14.3.1) subfamily.

The protein resides in the cell outer membrane. In terms of biological role, involved in the active translocation of vitamin B12 (cyanocobalamin) across the outer membrane to the periplasmic space. It derives its energy for transport by interacting with the trans-periplasmic membrane protein TonB. This is Vitamin B12 transporter BtuB from Salmonella choleraesuis (strain SC-B67).